The chain runs to 1455 residues: Fanconi anemia group A protein (1455 aa).

The Nuclear localization signal motif lies at 18–34 (RRRAWAELLAGRVKREK). Phosphoserine is present on S1449.

In terms of assembly, belongs to the multisubunit FA complex composed of FANCA, FANCB, FANCC, FANCE, FANCF, FANCG, FANCL/PHF9 and FANCM. The complex is not found in FA patients. In complex with FANCF, FANCG and FANCL, but not with FANCC, nor FANCE, interacts with HES1; this interaction may be essential for the stability and nuclear localization of FA core complex proteins. The complex with FANCC and FANCG may also include EIF2AK2 and HSP70. Interacts with FAAP20/C1orf86; interaction is direct. In terms of processing, phosphorylation is required for the formation of the nuclear complex. Not phosphorylated in cells derived from groups A, B, C, E, F, G, and H.

It is found in the nucleus. The protein localises to the cytoplasm. Its function is as follows. DNA repair protein that may operate in a postreplication repair or a cell cycle checkpoint function. May be involved in interstrand DNA cross-link repair and in the maintenance of normal chromosome stability. The sequence is that of Fanconi anemia group A protein (FANCA) from Homo sapiens (Human).